We begin with the raw amino-acid sequence, 73 residues long: Ocellatin-PT7 (73 aa).

The N-terminal stretch at 1-22 is a signal peptide; the sequence is MAFLKKSLFLVLFLGLVSLSIC. The propeptide occupies 23 to 39; it reads DEEKRQDEDDDDDDDEE.

As to expression, expressed by the skin glands.

Its subcellular location is the secreted. Has antibacterial activity against Gram-negative bacteria E.coli ATCC 25922 (MIC=60 uM) and S.choleraesuis ATCC 14028 (MIC=240 uM) and against Gram-positive bacterium S.aureus ATCC 29313 (MIC=240 uM). Shows no hemolytic activity and no cytotoxicity. This is Ocellatin-PT7 from Leptodactylus pustulatus (Ceara white-lipped frog).